The sequence spans 133 residues: Ribonuclease P protein component (133 aa).

It belongs to the RnpA family. As to quaternary structure, consists of a catalytic RNA component (M1 or rnpB) and a protein subunit.

It carries out the reaction Endonucleolytic cleavage of RNA, removing 5'-extranucleotides from tRNA precursor.. RNaseP catalyzes the removal of the 5'-leader sequence from pre-tRNA to produce the mature 5'-terminus. It can also cleave other RNA substrates such as 4.5S RNA. The protein component plays an auxiliary but essential role in vivo by binding to the 5'-leader sequence and broadening the substrate specificity of the ribozyme. In Pseudomonas fluorescens (strain Pf0-1), this protein is Ribonuclease P protein component.